A 332-amino-acid chain; its full sequence is 2,3-diketo-L-gulonate reductase (332 aa).

His44 functions as the Proton donor in the catalytic mechanism. NAD(+) is bound by residues 168–174 (ITMVDMS), 224–225 (WK), and 304–306 (GHE).

The protein belongs to the LDH2/MDH2 oxidoreductase family. DlgD subfamily. In terms of assembly, homodimer.

It is found in the cytoplasm. The catalysed reaction is 3-dehydro-L-gulonate + NAD(+) = 2,3-dioxo-L-gulonate + NADH + H(+). It carries out the reaction 3-dehydro-L-gulonate + NADP(+) = 2,3-dioxo-L-gulonate + NADPH + H(+). Functionally, catalyzes the reduction of 2,3-diketo-L-gulonate in the presence of NADH, to form 3-keto-L-gulonate. The chain is 2,3-diketo-L-gulonate reductase from Klebsiella oxytoca.